The following is a 208-amino-acid chain: Uracil phosphoribosyltransferase (208 aa).

Residues Arg78, Arg103, and 130–138 (DPMLATGGS) each bind 5-phospho-alpha-D-ribose 1-diphosphate. Uracil is bound by residues Ile193 and 198–200 (GDA). Position 199 (Asp199) interacts with 5-phospho-alpha-D-ribose 1-diphosphate.

Belongs to the UPRTase family. Requires Mg(2+) as cofactor.

It carries out the reaction UMP + diphosphate = 5-phospho-alpha-D-ribose 1-diphosphate + uracil. It functions in the pathway pyrimidine metabolism; UMP biosynthesis via salvage pathway; UMP from uracil: step 1/1. With respect to regulation, allosterically activated by GTP. Functionally, catalyzes the conversion of uracil and 5-phospho-alpha-D-ribose 1-diphosphate (PRPP) to UMP and diphosphate. In Desulfovibrio desulfuricans (strain ATCC 27774 / DSM 6949 / MB), this protein is Uracil phosphoribosyltransferase.